The primary structure comprises 104 residues: UPF0145 protein Hlac_1015 (104 aa).

The protein belongs to the UPF0145 family.

The chain is UPF0145 protein Hlac_1015 from Halorubrum lacusprofundi (strain ATCC 49239 / DSM 5036 / JCM 8891 / ACAM 34).